Consider the following 761-residue polypeptide: Pleckstrin homology domain-containing family M member 3 (761 aa).

Position 132 is a phosphoserine (S132). 2 PH domains span residues N211–H308 and N361–N456. A Phorbol-ester/DAG-type zinc finger spans residues S669 to C722.

As to quaternary structure, interacts with AKT1.

The protein localises to the cytoplasm. It is found in the golgi apparatus. It localises to the cell membrane. Involved in skeletal muscle differentiation. May act as a scaffold protein for AKT1 during muscle differentiation. This is Pleckstrin homology domain-containing family M member 3 from Homo sapiens (Human).